Consider the following 395-residue polypeptide: Serine-type anaerobic sulfatase-maturating enzyme (395 aa).

The Radical SAM core domain maps to 18 to 249 (PRSPVPFHIL…QWRKRCDRGR (232 aa)). Residues C35 and C39 each contribute to the [4Fe-4S] cluster site. An S-adenosyl-L-methionine-binding site is contributed by Y41. C42 provides a ligand contact to [4Fe-4S] cluster. Residues G84 and R152 each coordinate S-adenosyl-L-methionine. [4Fe-4S] cluster contacts are provided by C270, C276, and C291. D292 acts as the Proton acceptor in catalysis. Residues C331, C334, C340, C344, and C357 each coordinate [4Fe-4S] cluster.

The protein belongs to the radical SAM superfamily. Anaerobic sulfatase-maturating enzyme family. Monomer. Interacts with AtsA prior to its export to the periplasm. This interaction depends on the presence of AtsA 'Ser-72'. Binding of SAM to AtsB promotes the formation of a ternary AtsA-AtsB-SAM complex. The cofactor is [4Fe-4S] cluster.

The protein resides in the cytoplasm. The enzyme catalyses L-seryl-[sulfatase] + S-adenosyl-L-methionine = 3-oxo-L-alanyl-[sulfatase] + 5'-deoxyadenosine + L-methionine + H(+). It functions in the pathway protein modification; sulfatase oxidation. Its activity is regulated as follows. Activity is inhibited by iron chelators. Its function is as follows. Involved in 'Ser-type' sulfatase maturation under anaerobic conditions. Catalyzes the post-translational modification of serine ('Ser-72' in the arylsulfatase AtsA) into 3-oxoalanine (also known as C(alpha)-formylglycine (FGly)), by a free radical chemical mechanism initiated via the reductive cleavage of S-adenosyl-L-methionine (SAM). Is capable of catalyzing multiple turnovers. In vitro, use of a peptide substrate in which the target serine is changed to cysteine also gives rise to turnover, supporting approximately 4-fold the activity of that observed with the natural substrate. The sequence is that of Serine-type anaerobic sulfatase-maturating enzyme from Klebsiella pneumoniae.